The following is a 525-amino-acid chain: MRRRRRRDGFYPAPDFRHREAEDMAGVFDIDLDQPEDAGSEDELEEGGQLNESMDHGGVGPYELGMEHCEKFEISETSVNRGPEKIRPECFELLRVLGKGGYGKVFQVRKVTGANTGKIFAMKVLKKAMIVRNAKDTAHTKAERNILEEVKHPFIVDLIYAFQTGGKLYLILEYLSGGELFMQLEREGIFMEDTACFYLAEISMALGHLHQKGIIYRDLKPENIMLNHQGHVKLTDFGLCKESIHDGTVTHTFCGTIEYMAPEILMRSGHNRAVDWWSLGALMYDMLTGAPPFTGENRKKTIDKILKCKLNLPPYLTQEARDLLKKLLKRNAASRLGAGPGDAGEVQAHPFFRHINWEELLARKVEPPFKPLLQSEEDVSQFDSKFTRQTPVDSPDDSTLSESANQVFLGFTYVAPSVLESVKEKFSFEPKIRSPRRFIGSPRTPVSPVKFSPGDFWGRGASASTANPQTPVEYPMETSGIEQMDVTTSGEASAPLPIRQPNSGPYKKQAFPMISKRPEHLRMNL.

Residues F28 to L32 carry the TOS motif motif. The interval F28 to M54 is disordered. Residues I30–E46 show a composition bias toward acidic residues. The region spanning F91 to F352 is the Protein kinase domain. ATP-binding positions include L97 to V105 and K123. The active-site Proton acceptor is the D218. The residue at position 252 (T252) is a Phosphothreonine; by PDPK1. The AGC-kinase C-terminal domain occupies R353–K423. Residues S380–T399 form a disordered region. Residues Q381–T399 are compositionally biased toward polar residues. Phosphoserine is present on S394. Phosphothreonine; by MTOR, NEK6 and NEK7 is present on T412. Positions E424 to L525 are autoinhibitory domain. Phosphoserine is present on residues S434 and S441. Position 444 is a phosphothreonine (T444). Phosphoserine is present on residues S447 and S452. A disordered region spans residues V486 to Q509. K516 is modified (N6-acetyllysine).

Belongs to the protein kinase superfamily. AGC Ser/Thr protein kinase family. S6 kinase subfamily. As to quaternary structure, interacts with PPP1R9A/neurabin-1. Interacts with RPTOR. Interacts with IRS1. Interacts with EIF3B and EIF3C. Interacts with POLDIP3. Interacts with TRAF4. Interacts (via N-terminus) with IER5. In terms of processing, dephosphorylation by PPP1CC at Thr-412 in mitochondrion. Phosphorylation at Thr-412 is regulated by mTORC1. The phosphorylation at this site is maintained by an agonist-dependent autophosphorylation mechanism. Activated by phosphorylation at Thr-252 by PDPK1. Brain.

The protein resides in the cytoplasm. Its subcellular location is the synapse. It is found in the synaptosome. It localises to the mitochondrion outer membrane. The protein localises to the mitochondrion. It carries out the reaction L-seryl-[protein] + ATP = O-phospho-L-seryl-[protein] + ADP + H(+). The catalysed reaction is L-threonyl-[protein] + ATP = O-phospho-L-threonyl-[protein] + ADP + H(+). Its activity is regulated as follows. Activation requires multiple phosphorylation events on serine/threonine residues. Activation appears to be first mediated by phosphorylation of multiple sites in the autoinhibitory domain, which facilitates phosphorylation at Thr-412, disrupting the autoinhibitory mechanism and allowing phosphorylation of Thr-252 by PDPK1. The active conformation of the kinase is believed to be stabilized by a mechanism involving three conserved phosphorylation sites located in the kinase domain activation loop (Thr-252) and in the AGC-kinase C-terminal domain (Ser-394 in the middle of the tail/linker region and Thr-412 within a hydrophobic motif at its end). Activated by mTORC1; isoform Alpha I and isoform Alpha II are sensitive to rapamycin, which inhibits activating phosphorylation at Thr-412. Activated by PDPK1. Serine/threonine-protein kinase that acts downstream of mTOR signaling in response to growth factors and nutrients to promote cell proliferation, cell growth and cell cycle progression. Regulates protein synthesis through phosphorylation of EIF4B, RPS6 and EEF2K, and contributes to cell survival by repressing the pro-apoptotic function of BAD. Under conditions of nutrient depletion, the inactive form associates with the EIF3 translation initiation complex. Upon mitogenic stimulation, phosphorylation by the mechanistic target of rapamycin complex 1 (mTORC1) leads to dissociation from the EIF3 complex and activation. The active form then phosphorylates and activates several substrates in the pre-initiation complex, including the EIF2B complex and the cap-binding complex component EIF4B. Also controls translation initiation by phosphorylating a negative regulator of EIF4A, PDCD4, targeting it for ubiquitination and subsequent proteolysis. Promotes initiation of the pioneer round of protein synthesis by phosphorylating POLDIP3/SKAR. In response to IGF1, activates translation elongation by phosphorylating EEF2 kinase (EEF2K), which leads to its inhibition and thus activation of EEF2. Also plays a role in feedback regulation of mTORC2 by mTORC1 by phosphorylating MAPKAP1/SIN1, MTOR and RICTOR, resulting in the inhibition of mTORC2 and AKT1 signaling. Also involved in feedback regulation of mTORC1 and mTORC2 by phosphorylating DEPTOR. Mediates cell survival by phosphorylating the pro-apoptotic protein BAD and suppressing its pro-apoptotic function. Phosphorylates mitochondrial URI1 leading to dissociation of a URI1-PPP1CC complex. The free mitochondrial PPP1CC can then dephosphorylate RPS6KB1 at Thr-412, which is proposed to be a negative feedback mechanism for the RPS6KB1 anti-apoptotic function. Mediates TNF-alpha-induced insulin resistance by phosphorylating IRS1 at multiple serine residues, resulting in accelerated degradation of IRS1. In cells lacking functional TSC1-2 complex, constitutively phosphorylates and inhibits GSK3B. May be involved in cytoskeletal rearrangement through binding to neurabin. Phosphorylates and activates the pyrimidine biosynthesis enzyme CAD, downstream of MTOR. Following activation by mTORC1, phosphorylates EPRS and thereby plays a key role in fatty acid uptake by adipocytes and also most probably in interferon-gamma-induced translation inhibition. The sequence is that of Ribosomal protein S6 kinase beta-1 (Rps6kb1) from Rattus norvegicus (Rat).